Here is a 476-residue protein sequence, read N- to C-terminus: UDP-N-acetylmuramate--L-alanine ligase (476 aa).

An ATP-binding site is contributed by 121 to 127 (GAHGKTT).

The protein belongs to the MurCDEF family.

The protein resides in the cytoplasm. It carries out the reaction UDP-N-acetyl-alpha-D-muramate + L-alanine + ATP = UDP-N-acetyl-alpha-D-muramoyl-L-alanine + ADP + phosphate + H(+). It participates in cell wall biogenesis; peptidoglycan biosynthesis. Its function is as follows. Cell wall formation. This chain is UDP-N-acetylmuramate--L-alanine ligase, found in Clavibacter sepedonicus (Clavibacter michiganensis subsp. sepedonicus).